Consider the following 144-residue polypeptide: Large ribosomal subunit protein uL15 (144 aa).

The interval 1–58 is disordered; the sequence is MQLNDLRSAPGARREKLRPGRGIGSGLGKTGGRGHKGQTSRSGGKIAPGFEGGQQPLH. The segment covering 21–31 has biased composition (gly residues); the sequence is RGIGSGLGKTG.

It belongs to the universal ribosomal protein uL15 family. As to quaternary structure, part of the 50S ribosomal subunit.

In terms of biological role, binds to the 23S rRNA. This is Large ribosomal subunit protein uL15 from Azotobacter vinelandii (strain DJ / ATCC BAA-1303).